Reading from the N-terminus, the 310-residue chain is MRRISTLYGVVDKQAIFFSEVVIGISFNSILFLFHIFQFLLERRLRITDLIISLLALIHLGMLTVMGFRAVDIFASQNVWNDIKCKSLAHLHRLLRGLSLCATCLLSIFQAITLSPRSSCLAKFKYKSTQHSLCSLLVLWAFYMSCGTHYSFTIVADYNFSSRSLIFVTESCIILPMDYITRHLFFILGIFRDVSFIGLMALSSGYMVALLCRHRKQAQHLHRTSLSPKASPEQRATRTILLLMSFFVLMYCLDCTISASRLMHNGEPIHHSIQMMVSNSYATLSPLLLIVTENRISRFLKSLLGRTVDA.

At 1–20 (MRRISTLYGVVDKQAIFFSE) the chain is on the extracellular side. The chain crosses the membrane as a helical span at residues 21–41 (VVIGISFNSILFLFHIFQFLL). At 42 to 46 (ERRLR) the chain is on the cytoplasmic side. The helical transmembrane segment at 47–67 (ITDLIISLLALIHLGMLTVMG) threads the bilayer. The Extracellular portion of the chain corresponds to 68-93 (FRAVDIFASQNVWNDIKCKSLAHLHR). The cysteines at positions 85 and 172 are disulfide-linked. Residues 94 to 114 (LLRGLSLCATCLLSIFQAITL) form a helical membrane-spanning segment. At 115–135 (SPRSSCLAKFKYKSTQHSLCS) the chain is on the cytoplasmic side. Residues 136 to 156 (LLVLWAFYMSCGTHYSFTIVA) traverse the membrane as a helical segment. At 157-183 (DYNFSSRSLIFVTESCIILPMDYITRH) the chain is on the extracellular side. Asn159 is a glycosylation site (N-linked (GlcNAc...) asparagine). The helical transmembrane segment at 184 to 204 (LFFILGIFRDVSFIGLMALSS) threads the bilayer. Topologically, residues 205-238 (GYMVALLCRHRKQAQHLHRTSLSPKASPEQRATR) are cytoplasmic. A helical transmembrane segment spans residues 239 to 259 (TILLLMSFFVLMYCLDCTISA). At 260–271 (SRLMHNGEPIHH) the chain is on the extracellular side. The helical transmembrane segment at 272-292 (SIQMMVSNSYATLSPLLLIVT) threads the bilayer. The Cytoplasmic portion of the chain corresponds to 293–310 (ENRISRFLKSLLGRTVDA).

This sequence belongs to the G-protein coupled receptor 1 family. Expressed in 1-4% of neurons of the vomeronasal organ. Only one pheromone receptor gene may be expressed in a particular neuron. Not expressed in the main olfactory epithelium.

It is found in the cell membrane. In terms of biological role, putative pheromone receptor implicated in the regulation of social as well as reproductive behavior. The chain is Vomeronasal type-1 receptor 90 (Vom1r90) from Rattus norvegicus (Rat).